We begin with the raw amino-acid sequence, 523 residues long: Occludin (523 aa).

Positions 1–20 are disordered; sequence MSVRPFESPPPYRPDEFKPN. Residues 1–66 lie on the Cytoplasmic side of the membrane; it reads MSVRPFESPP…KWTSPPGVIR (66 aa). The region spanning 60-269 is the MARVEL domain; sequence SPPGVIRILS…IIVFAVKTRR (210 aa). A helical membrane pass occupies residues 67 to 87; sequence ILSMLVIVMCIAVFACVASTL. At 88 to 140 the chain is on the extracellular side; sequence AWDRAYGTGIFGGSMNYPYGSGFGSYGGGFGGYGYGYGYGYGGYTDPRAAKGF. The helical transmembrane segment at 141–161 threads the bilayer; it reads LLAMAAFCFIASLVIFVTSVI. Topologically, residues 162–173 are cytoplasmic; it reads RSGMSRTRRYYL. The helical transmembrane segment at 174-194 threads the bilayer; sequence IVIIVSAILGIMVFIATIVYI. Residues 195-244 are Extracellular-facing; the sequence is MGVNPTAQASGSMYGSQIYTICSQFYTPGGTGLYVDQYLYHYCVVDPQEA. The cysteines at positions 216 and 237 are disulfide-linked. A helical membrane pass occupies residues 245-265; sequence IAIVLGFMIIVAFALIIVFAV. The Cytoplasmic segment spans residues 266–523; that stretch reads KTRRKMDRYD…MVGDYDRRKT (258 aa). Ser-302 carries the post-translational modification Phosphoserine. The tract at residues 302 to 338 is disordered; that stretch reads SAGTQDMPPPPSDYAERVDSPMAYSSNGKVNGKRSYP. Thr-305 carries the post-translational modification Phosphothreonine. Phosphoserine occurs at positions 313, 321, 340, and 360. Residues 363-408 form a disordered region; sequence DFRQPRYSSNDNLETPSKRTPTKGKAGKAKRTDPDHYETDYTTGGE. Residues 368–381 show a composition bias toward polar residues; the sequence is RYSSNDNLETPSKR. A Phosphotyrosine modification is found at Tyr-369. 2 positions are modified to phosphoserine: Ser-370 and Ser-371. The segment covering 382-391 has biased composition (basic residues); the sequence is TPTKGKAGKA. Over residues 392–401 the composition is skewed to basic and acidic residues; the sequence is KRTDPDHYET. Phosphotyrosine is present on residues Tyr-399 and Tyr-403. Thr-404 and Thr-405 each carry phosphothreonine; by PKC/PRKCH. Ser-409 is subject to Phosphoserine. Residues 415–523 enclose the OCEL domain; that stretch reads EDWLREYPPI…MVGDYDRRKT (109 aa). Residues 433–489 are a coiled coil; sequence YKRNFDAGLQEYKSLLAELDEVNKELSRLDRELDDYREESEEYMAAADEYNRLKQVK. Phosphoserine is present on Ser-491.

It belongs to the ELL/occludin family. In terms of assembly, interacts with TJP1/ZO1. Interacts with VAPA. Interacts with CLDN1, CLDN6, CLDN9, CLDN11, CLDN12 and CLDN17. Interacts with PLSCR1. Interacts with LSR, ILDR1 and ILDR2. Interacts with TJP2/ZO2. In terms of processing, dephosphorylated by PTPRJ.

It is found in the cell membrane. Its subcellular location is the cell junction. The protein resides in the tight junction. Functionally, may play a role in the formation and regulation of the tight junction (TJ) paracellular permeability barrier. May be involved in the organization of actin in endothelial cells. This chain is Occludin (Ocln), found in Rattus norvegicus (Rat).